The sequence spans 294 residues: Phosphatidylinositol transfer protein SFH5 (294 aa).

The region spanning 100–266 (HNTELQNVGI…GYGGKDKKNN (167 aa)) is the CRAL-TRIO domain. Heme contacts are provided by tyrosine 128, arginine 148, histidine 173, tyrosine 175, and lysine 209.

The protein belongs to the SFH5 family. Heme b serves as cofactor.

The protein localises to the cytoplasm. It localises to the endoplasmic reticulum membrane. The protein resides in the microsome membrane. It catalyses the reaction a 1,2-diacyl-sn-glycero-3-phospho-(1D-myo-inositol)(in) = a 1,2-diacyl-sn-glycero-3-phospho-(1D-myo-inositol)(out). Functionally, non-classical phosphatidylinositol (PtdIns) transfer protein (PITP), which exhibits PtdIns-binding/transfer activity in the absence of detectable PtdCho-binding/transfer activity. Regulates PtdIns(4,5)P2 homeostasis at the plasma membrane. Heme-binding protein that may play a role in organic oxidant-induced stress responses. This chain is Phosphatidylinositol transfer protein SFH5 (SFH5), found in Saccharomyces cerevisiae (strain YJM789) (Baker's yeast).